The primary structure comprises 331 residues: Lipoyl synthase (331 aa).

Cysteine 57, cysteine 62, cysteine 68, cysteine 83, cysteine 87, cysteine 90, and serine 294 together coordinate [4Fe-4S] cluster. The region spanning 69–283 is the Radical SAM core domain; the sequence is WEDREATFLI…KAEAEAIGFL (215 aa).

Belongs to the radical SAM superfamily. Lipoyl synthase family. [4Fe-4S] cluster is required as a cofactor.

The protein resides in the cytoplasm. It catalyses the reaction [[Fe-S] cluster scaffold protein carrying a second [4Fe-4S](2+) cluster] + N(6)-octanoyl-L-lysyl-[protein] + 2 oxidized [2Fe-2S]-[ferredoxin] + 2 S-adenosyl-L-methionine + 4 H(+) = [[Fe-S] cluster scaffold protein] + N(6)-[(R)-dihydrolipoyl]-L-lysyl-[protein] + 4 Fe(3+) + 2 hydrogen sulfide + 2 5'-deoxyadenosine + 2 L-methionine + 2 reduced [2Fe-2S]-[ferredoxin]. It functions in the pathway protein modification; protein lipoylation via endogenous pathway; protein N(6)-(lipoyl)lysine from octanoyl-[acyl-carrier-protein]: step 2/2. Its function is as follows. Catalyzes the radical-mediated insertion of two sulfur atoms into the C-6 and C-8 positions of the octanoyl moiety bound to the lipoyl domains of lipoate-dependent enzymes, thereby converting the octanoylated domains into lipoylated derivatives. This is Lipoyl synthase from Clavibacter michiganensis subsp. michiganensis (strain NCPPB 382).